Here is an 89-residue protein sequence, read N- to C-terminus: Mitochondrial import inner membrane translocase subunit tim10 (89 aa).

A Twin CX3C motif motif is present at residues cysteine 39–cysteine 64. Cystine bridges form between cysteine 39-cysteine 64 and cysteine 43-cysteine 60.

Belongs to the small Tim family. As to quaternary structure, heterohexamer; composed of 3 copies of TIM9 and 3 copies of TIM10, named soluble 70 kDa complex. Associates directly with the TIM22 complex, whose core is composed of TIM22 and TIM54. Interacts with the transmembrane regions of multi-pass transmembrane proteins in transit.

It is found in the mitochondrion inner membrane. Functionally, mitochondrial intermembrane chaperone that participates in the import and insertion of multi-pass transmembrane proteins into the mitochondrial inner membrane. Also required for the transfer of beta-barrel precursors from the TOM complex to the sorting and assembly machinery (SAM complex) of the outer membrane. Acts as a chaperone-like protein that protects the hydrophobic precursors from aggregation and guide them through the mitochondrial intermembrane space. This chain is Mitochondrial import inner membrane translocase subunit tim10 (tim10), found in Schizosaccharomyces pombe (strain 972 / ATCC 24843) (Fission yeast).